The sequence spans 314 residues: Ribosomal RNA small subunit methyltransferase H (314 aa).

Residues 36 to 38 (GGH), Asp-56, Phe-80, Asp-102, and Gln-109 contribute to the S-adenosyl-L-methionine site.

Belongs to the methyltransferase superfamily. RsmH family.

It localises to the cytoplasm. It carries out the reaction cytidine(1402) in 16S rRNA + S-adenosyl-L-methionine = N(4)-methylcytidine(1402) in 16S rRNA + S-adenosyl-L-homocysteine + H(+). Specifically methylates the N4 position of cytidine in position 1402 (C1402) of 16S rRNA. This chain is Ribosomal RNA small subunit methyltransferase H, found in Citrobacter koseri (strain ATCC BAA-895 / CDC 4225-83 / SGSC4696).